The sequence spans 864 residues: MPCVQLPAKESALFKRVLKCYEQKQYKNGLKFCKMILSNPKFAEHGETLAMKGLILNCLGKREEAYEFVRKGLRSDVRSHVCWHVYGLLQRSDKKYDEAIKCYRNALKLDKDNLQILRDLSLLQIQMRDLEGYRETRYQLLQLRPTQRASWIGYAIAYHLLKDYDTALKLLEEFRQTQQVPPNKIAYEYSELLLYQNQVMREANLFQESLEHIETYEKLICDKLLVEEIKGEMLLKLGRLKEASEVFRNLIDWNAENWCYYEGLEKALQLRSLDERLQLYEEVSKQHPRAVSPRRLPLSFAPGKKFRELMDKFLRPNFSKGCPPLFTTLKSLYCDTEKVSIIQELVTNYEASLKMNGYFSPYENGEKEPPTTLIWVQYFLAQHYDKLGQYFLALEYINAVIASTPTLIELFYMKAKIYKHMGNLKEAAQWMDEAQSLDTADRFINSKCAKYMLRANMIKEAEEMCSRFTREGTSAMENLNEMQCMWFETECISAYQRLGRYGDALKKCHEVERHFLEITDDQFDFHTYCMRKMTLRAYVGLLRLEDALRRHTFYFKAARSAIEIYLKLHDNPLTNDSKQQDIDSENLSAKEMKKMLSKQRRAQKKAKVEEERKHTERERQQKNQKKKREEEEEVTSGHKEELIPEKLERVDNPLEEAIKFLTPLKTLAAESIDTHLLAFEIYFRKGKFLLMLQSVKRAFAIESNNPWLHECLIKFSKSVSNHSNLPDIVSKVLAQEMKKIFVNKDLHSFNEDFLRHNATSLQHLLAGAKMMYFLDKSRQEKAIATATRLDETIKNKNVKTLIKVSEALLDGSFGNCSSQYEEYRKTCHSLLPLTPAFLPAAREALGLSAELNHTADHKLLMNEI.

TPR repeat units follow at residues 46–79 (GETLAMKGLILNCLGKREEAYEFVRKGLRSDVRS), 80–113 (HVCWHVYGLLQRSDKKYDEAIKCYRNALKLDKDN), 148–184 (RASWIGYAIAYHLLKDYDTALKLLEEFRQTQQVPPNK), 224–257 (LLVEEIKGEMLLKLGRLKEASEVFRNLIDWNAEN), 374–407 (IWVQYFLAQHYDKLGQYFLALEYINAVIASTPTL), 408–441 (IELFYMKAKIYKHMGNLKEAAQWMDEAQSLDTAD), and 485–514 (MWFETECISAYQRLGRYGDALKKCHEVERH). Positions 594-646 (KMLSKQRRAQKKAKVEEERKHTERERQQKNQKKKREEEEEVTSGHKEELIPEK) are disordered. Residues 595-605 (MLSKQRRAQKK) show a composition bias toward basic residues. Composition is skewed to basic and acidic residues over residues 606-621 (AKVEEERKHTERERQQ) and 635-646 (TSGHKEELIPEK).

As to quaternary structure, component of the N-terminal acetyltransferase A (NatA) complex composed of NAA10 and NAA16. In terms of tissue distribution, highest levels in the kidney and testes. Moderate expression in the liver, thymus and skin.

In terms of biological role, auxillary subunit of the N-terminal acetyltransferase A (NatA) complex which displays alpha (N-terminal) acetyltransferase activity. The sequence is that of N-alpha-acetyltransferase 16, NatA auxiliary subunit (Naa16) from Mus musculus (Mouse).